We begin with the raw amino-acid sequence, 318 residues long: Acetyl-coenzyme A carboxylase carboxyl transferase subunit alpha (318 aa).

Residues 38-292 form the CoA carboxyltransferase C-terminal domain; that stretch reads KLEKRLAKLE…NKTITKSLHA (255 aa).

Belongs to the AccA family. Acetyl-CoA carboxylase is a heterohexamer composed of biotin carboxyl carrier protein (AccB), biotin carboxylase (AccC) and two subunits each of ACCase subunit alpha (AccA) and ACCase subunit beta (AccD).

Its subcellular location is the cytoplasm. The catalysed reaction is N(6)-carboxybiotinyl-L-lysyl-[protein] + acetyl-CoA = N(6)-biotinyl-L-lysyl-[protein] + malonyl-CoA. It functions in the pathway lipid metabolism; malonyl-CoA biosynthesis; malonyl-CoA from acetyl-CoA: step 1/1. Its function is as follows. Component of the acetyl coenzyme A carboxylase (ACC) complex. First, biotin carboxylase catalyzes the carboxylation of biotin on its carrier protein (BCCP) and then the CO(2) group is transferred by the carboxyltransferase to acetyl-CoA to form malonyl-CoA. This chain is Acetyl-coenzyme A carboxylase carboxyl transferase subunit alpha, found in Listeria welshimeri serovar 6b (strain ATCC 35897 / DSM 20650 / CCUG 15529 / CIP 8149 / NCTC 11857 / SLCC 5334 / V8).